The sequence spans 120 residues: Flagellar protein FliT (120 aa).

The tract at residues 1–50 (MERHQHLLSEYQQILTLSEQMLMLATVENWNALVDLEMTYLKAVENTANI) is required for homodimerization. The fliD binding stretch occupies residues 60–98 (LQELLRQKLRSILENEIEIKRLLQRRLDKLSELVGQSTR).

It belongs to the FliT family. Homodimer. Interacts with FliD and FlhC.

The protein resides in the cytoplasm. Its subcellular location is the cytosol. Dual-function protein that regulates the transcription of class 2 flagellar operons and that also acts as an export chaperone for the filament-capping protein FliD. As a transcriptional regulator, acts as an anti-FlhDC factor; it directly binds FlhC, thus inhibiting the binding of the FlhC/FlhD complex to class 2 promoters, resulting in decreased expression of class 2 flagellar operons. As a chaperone, effects FliD transition to the membrane by preventing its premature polymerization, and by directing it to the export apparatus. This chain is Flagellar protein FliT, found in Yersinia pestis bv. Antiqua (strain Antiqua).